The sequence spans 112 residues: Reprimo-like protein (112 aa).

A helical membrane pass occupies residues 59–79 (VVQIAVLCVLSLTVLFGIFFL).

This sequence belongs to the reprimo family.

It is found in the membrane. This Xenopus laevis (African clawed frog) protein is Reprimo-like protein (rprml).